The sequence spans 120 residues: UPF0102 protein NT01CX_2205 (120 aa).

This sequence belongs to the UPF0102 family.

The protein is UPF0102 protein NT01CX_2205 of Clostridium novyi (strain NT).